A 1013-amino-acid polypeptide reads, in one-letter code: Probable outer membrane protein PmpG (1013 aa).

Positions 1–27 (MQTSFHKFFLSMILAYSCCSLSGGGYA) are cleaved as a signal peptide. The Autotransporter domain occupies 733-1013 (GRSYCRGLWV…GLSAGSKVRF (281 aa)).

The protein belongs to the PMP outer membrane protein family.

The protein resides in the secreted. It localises to the cell wall. The protein localises to the cell outer membrane. In Chlamydia trachomatis serovar D (strain ATCC VR-885 / DSM 19411 / UW-3/Cx), this protein is Probable outer membrane protein PmpG (pmpG).